The sequence spans 644 residues: CTP synthase (644 aa).

The Glutamine amidotransferase type-1 domain occupies 300-551; sequence SIAIVGKYTK…LGLILASVDR (252 aa). Active-site for GATase activity residues include Cys-399, His-527, and Glu-529.

This sequence belongs to the CTP synthase family.

The enzyme catalyses UTP + L-glutamine + ATP + H2O = CTP + L-glutamate + ADP + phosphate + 2 H(+). The protein operates within pyrimidine metabolism; CTP biosynthesis via de novo pathway; CTP from UDP: step 2/2. Catalyzes the ATP-dependent amination of UTP to CTP with either L-glutamine or ammonia as the source of nitrogen. Constitutes the rate-limiting enzyme in the synthesis of cytosine nucleotides. The polypeptide is CTP synthase (Drosophila pseudoobscura pseudoobscura (Fruit fly)).